Consider the following 506-residue polypeptide: Sucrose transport protein SUT3 (506 aa).

Over 1-20 (MAVDMELDGGGDGKGKAPPQ) the chain is Cytoplasmic. Residues 21–41 (ISLSGLFLACMVAGGVQYGWA) form a helical membrane-spanning segment. Over 42-54 (LQLSLLTPYVQTL) the chain is Extracellular. The chain crosses the membrane as a helical span at residues 55 to 75 (GIPHALTSVMWLCGPIAGLIV). Over 76 to 94 (QPCVGLYSDKCTSSLGRRR) the chain is Cytoplasmic. A helical membrane pass occupies residues 95–115 (PFILTGCIIICISVIVIGFSS). Residues 116-135 (DIGYALGDTTEDCKVYRGPR) lie on the Extracellular side of the membrane. A helical transmembrane segment spans residues 136–156 (YHAAAAFILGFWLLDFSNNTV). Residues 157-171 (QGPARALMADLSGRH) lie on the Cytoplasmic side of the membrane. The chain crosses the membrane as a helical span at residues 172 to 192 (GPSAANAIFCSWMALGNILGY). Residues 193-220 (SSGSTNDWHKWFPFLMTRACCEACANLK) lie on the Extracellular side of the membrane. The helical transmembrane segment at 221–241 (AAFLVAVVFLGLSTAVTMVFA) threads the bilayer. Residues 242-275 (REVALDPVAAAKRNEGEASGLLAVFKGMKNLPVG) lie on the Cytoplasmic side of the membrane. The chain crosses the membrane as a helical span at residues 276–296 (MPSVLIVTGLTWLSWFPFILF). Over 297–327 (DTDWMGREIYHGRPDGSPAEVTAFQEGVRQG) the chain is Extracellular. The helical transmembrane segment at 328 to 348 (AFGLLLNSIVLGISSFLIEPM) threads the bilayer. Topologically, residues 349–355 (CRRLGAR) are cytoplasmic. A helical transmembrane segment spans residues 356-376 (AVWVMSSAVVCVAMAAVSVLS). Residues 377–404 (AWSLGDFGGSVQDAARAPAEEGGVRASA) lie on the Extracellular side of the membrane. A helical transmembrane segment spans residues 405–425 (LALFVFLGLPFAVLCSVPFAV). At 426–441 (TAQLAASRGGGQGLCT) the chain is on the cytoplasmic side. The helical transmembrane segment at 442 to 462 (GVLNISIVVPQMAIALGAGPW) threads the bilayer. The Extracellular portion of the chain corresponds to 463–470 (DELFGEGN). Residues 471–491 (IPAFAMASVFAAAAAAAGVVL) traverse the membrane as a helical segment. Topologically, residues 492 to 506 (LPKVSVRSVSMAGGH) are cytoplasmic.

It belongs to the glycoside-pentoside-hexuronide (GPH) cation symporter transporter (TC 2.A.2.4) family. In terms of assembly, homodimer. As to expression, widely expressed. Highest expression in sink leaves and lowest in germinating seeds.

Its subcellular location is the cell membrane. The protein operates within glycan biosynthesis; sucrose metabolism. In terms of biological role, responsible for the transport of sucrose into the cell, with the concomitant uptake of protons (symport system). May also transport other glucosides. This is Sucrose transport protein SUT3 (SUT3) from Oryza sativa subsp. japonica (Rice).